A 352-amino-acid polypeptide reads, in one-letter code: UPF0252 protein MJ1282 (352 aa).

The protein belongs to the UPF0252 family.

The sequence is that of UPF0252 protein MJ1282 from Methanocaldococcus jannaschii (strain ATCC 43067 / DSM 2661 / JAL-1 / JCM 10045 / NBRC 100440) (Methanococcus jannaschii).